Consider the following 216-residue polypeptide: 4-hydroxy-tetrahydrodipicolinate reductase (216 aa).

NAD(+) contacts are provided by residues 7-12 (GYSGRM), 71-73 (GTT), and 95-98 (AYNF). His-127 acts as the Proton donor/acceptor in catalysis. His-128 is a (S)-2,3,4,5-tetrahydrodipicolinate binding site. Lys-131 serves as the catalytic Proton donor. 137–138 (GT) contacts (S)-2,3,4,5-tetrahydrodipicolinate.

Belongs to the DapB family.

The protein localises to the cytoplasm. It carries out the reaction (S)-2,3,4,5-tetrahydrodipicolinate + NAD(+) + H2O = (2S,4S)-4-hydroxy-2,3,4,5-tetrahydrodipicolinate + NADH + H(+). It catalyses the reaction (S)-2,3,4,5-tetrahydrodipicolinate + NADP(+) + H2O = (2S,4S)-4-hydroxy-2,3,4,5-tetrahydrodipicolinate + NADPH + H(+). It participates in amino-acid biosynthesis; L-lysine biosynthesis via DAP pathway; (S)-tetrahydrodipicolinate from L-aspartate: step 4/4. Catalyzes the conversion of 4-hydroxy-tetrahydrodipicolinate (HTPA) to tetrahydrodipicolinate. This is 4-hydroxy-tetrahydrodipicolinate reductase from Thermotoga sp. (strain RQ2).